The primary structure comprises 518 residues: Glutamate--cysteine ligase (518 aa).

Belongs to the glutamate--cysteine ligase type 1 family. Type 1 subfamily.

It carries out the reaction L-cysteine + L-glutamate + ATP = gamma-L-glutamyl-L-cysteine + ADP + phosphate + H(+). Its pathway is sulfur metabolism; glutathione biosynthesis; glutathione from L-cysteine and L-glutamate: step 1/2. In Cronobacter sakazakii (strain ATCC BAA-894) (Enterobacter sakazakii), this protein is Glutamate--cysteine ligase.